The primary structure comprises 289 residues: Ribosomal protein L11 methyltransferase (289 aa).

Residues Thr135, Gly156, Asp179, and Asn225 each contribute to the S-adenosyl-L-methionine site.

Belongs to the methyltransferase superfamily. PrmA family.

Its subcellular location is the cytoplasm. The catalysed reaction is L-lysyl-[protein] + 3 S-adenosyl-L-methionine = N(6),N(6),N(6)-trimethyl-L-lysyl-[protein] + 3 S-adenosyl-L-homocysteine + 3 H(+). In terms of biological role, methylates ribosomal protein L11. The polypeptide is Ribosomal protein L11 methyltransferase (Chlorobaculum parvum (strain DSM 263 / NCIMB 8327) (Chlorobium vibrioforme subsp. thiosulfatophilum)).